We begin with the raw amino-acid sequence, 211 residues long: SAGA-associated factor 11 homolog (211 aa).

The SGF11-type zinc finger occupies 115–136 (CTCPHCDRLVAAARFAPHLEKC). Residues 153–211 (TKEGASASSSSTSTYIQSGGNTGGTDDEDDVDWSSDKRKKKSTQNSRNNGSKKNNGKIF) are disordered. Residues 157–166 (ASASSSSTST) are compositionally biased toward low complexity. Position 187 is a phosphoserine (serine 187). Positions 197–211 (NSRNNGSKKNNGKIF) are enriched in low complexity.

This sequence belongs to the SGF11 family. In terms of assembly, component of some SAGA transcription coactivator-HAT complexes, at least composed of Ada2b, not/nonstop, Pcaf/Gcn5, Sgf11 and Spt3. Within the SAGA complex, Sgf11, e(y)2, and not/nonstop form an additional subcomplex of SAGA called the DUB module (deubiquitination module). Interacts directly with not/nonstop. Interacts with the AMEX complex component xmas-2. Interacts with Cbp80; important for promoter recruitment of Sgf11 that is not associated with the DUB module.

It is found in the nucleus. Its subcellular location is the nucleoplasm. The protein resides in the cytoplasm. Its function is as follows. Component of the transcription regulatory histone acetylation (HAT) complex SAGA, a multiprotein complex that activates transcription by remodeling chromatin and mediating histone acetylation and deubiquitination. Within the SAGA complex, participates in a subcomplex that specifically deubiquitinates histone H2B. The SAGA complex is recruited to specific gene promoters by activators, where it is required for transcription. Required for nuclear receptor-mediated transactivation. Binds independently on SAGA to promoters in an RNA-dependent manner. Binds to mRNA and is essential for total mRNA export from the nucleus. Required to counteract heterochromatin silencing. Controls the development of neuronal connectivity in visual system by being required for accurate axon targeting in the optic lobe. Required for expression of ecdysone-induced genes such as br/broad. This Drosophila mojavensis (Fruit fly) protein is SAGA-associated factor 11 homolog.